We begin with the raw amino-acid sequence, 240 residues long: Ribosomal RNA small subunit methyltransferase I (240 aa).

It belongs to the methyltransferase superfamily. RsmI family.

The protein localises to the cytoplasm. It catalyses the reaction cytidine(1402) in 16S rRNA + S-adenosyl-L-methionine = 2'-O-methylcytidine(1402) in 16S rRNA + S-adenosyl-L-homocysteine + H(+). In terms of biological role, catalyzes the 2'-O-methylation of the ribose of cytidine 1402 (C1402) in 16S rRNA. This chain is Ribosomal RNA small subunit methyltransferase I, found in Leptospira biflexa serovar Patoc (strain Patoc 1 / ATCC 23582 / Paris).